The chain runs to 96 residues: uncharacterized protein (96 aa).

This is an uncharacterized protein from Sulfolobus islandicus filamentous virus (isolate Iceland/Hveragerdi) (SIFV).